A 287-amino-acid chain; its full sequence is Large ribosomal subunit protein uL2 (287 aa).

The disordered stretch occupies residues 221–287 (RGSVMNPCDH…SKRSRGGRDS (67 aa)). A compositionally biased stretch (basic residues) spans 258–287 (KTRKKNKPSNKLVVRRRRRISKRSRGGRDS).

This sequence belongs to the universal ribosomal protein uL2 family. In terms of assembly, part of the 50S ribosomal subunit. Forms a bridge to the 30S subunit in the 70S ribosome.

Its function is as follows. One of the primary rRNA binding proteins. Required for association of the 30S and 50S subunits to form the 70S ribosome, for tRNA binding and peptide bond formation. It has been suggested to have peptidyltransferase activity; this is somewhat controversial. Makes several contacts with the 16S rRNA in the 70S ribosome. The chain is Large ribosomal subunit protein uL2 from Prochlorococcus marinus subsp. pastoris (strain CCMP1986 / NIES-2087 / MED4).